The chain runs to 81 residues: MSGTTGERPFSDIVTSIRYWVIHSITIPMLFIAGWLFVSTGLAYDAFGTPRPDEYFTQTRQELPILQERYDINQEIQEFNQ.

Heme contacts are provided by arginine 18 and histidine 23. The chain crosses the membrane as a helical span at residues 19–40 (YWVIHSITIPMLFIAGWLFVST).

This sequence belongs to the PsbE/PsbF family. Heterodimer of an alpha subunit and a beta subunit. PSII is composed of 1 copy each of membrane proteins PsbA, PsbB, PsbC, PsbD, PsbE, PsbF, PsbH, PsbI, PsbJ, PsbK, PsbL, PsbM, PsbT, PsbX, PsbY, PsbZ, Psb30/Ycf12, peripheral proteins PsbO, CyanoQ (PsbQ), PsbU, PsbV and a large number of cofactors. It forms dimeric complexes. Requires heme b as cofactor.

Its subcellular location is the cellular thylakoid membrane. This b-type cytochrome is tightly associated with the reaction center of photosystem II (PSII). PSII is a light-driven water:plastoquinone oxidoreductase that uses light energy to abstract electrons from H(2)O, generating O(2) and a proton gradient subsequently used for ATP formation. It consists of a core antenna complex that captures photons, and an electron transfer chain that converts photonic excitation into a charge separation. The protein is Cytochrome b559 subunit alpha of Synechocystis sp. (strain ATCC 27184 / PCC 6803 / Kazusa).